We begin with the raw amino-acid sequence, 266 residues long: MSDILNKILDVKADEVAAAKKYRSLASLRDEVEGNKEARAAIRGFEASLRAKIAAGQAGIIAEIKKASPSKGVIRPDFHPADIAVSYEKNGAACLSVLTDVQFFQGAPEYLKQARTACALPALRKDFMIDPYQLYEARSWGADCILLIVAALDHGLMAELEACAHELGMNVLVEVHNAEELTAALKLKTSLLGVNNRNLRTFETSLQTTLDLLPRISPDKLVITESAIVTPDDVKKMRDADVHAFLVGEAFMRAPDPGVELGRLFN.

Belongs to the TrpC family.

The catalysed reaction is 1-(2-carboxyphenylamino)-1-deoxy-D-ribulose 5-phosphate + H(+) = (1S,2R)-1-C-(indol-3-yl)glycerol 3-phosphate + CO2 + H2O. It functions in the pathway amino-acid biosynthesis; L-tryptophan biosynthesis; L-tryptophan from chorismate: step 4/5. The sequence is that of Indole-3-glycerol phosphate synthase from Janthinobacterium sp. (strain Marseille) (Minibacterium massiliensis).